Consider the following 260-residue polypeptide: ATP-dependent zinc metalloprotease FTSH, chloroplastic (260 aa).

Residue His219 coordinates Zn(2+). Residue Glu220 is part of the active site. A Zn(2+)-binding site is contributed by His223.

This sequence in the N-terminal section; belongs to the AAA ATPase family. The protein in the C-terminal section; belongs to the peptidase M41 family. The cofactor is Zn(2+).

It localises to the plastid. It is found in the chloroplast thylakoid membrane. Functionally, probable ATP-dependent zinc metallopeptidase. The chain is ATP-dependent zinc metalloprotease FTSH, chloroplastic from Helianthus annuus (Common sunflower).